Reading from the N-terminus, the 147-residue chain is UPF0178 protein AFE_3267 (147 aa).

The protein belongs to the UPF0178 family.

The chain is UPF0178 protein AFE_3267 from Acidithiobacillus ferrooxidans (strain ATCC 23270 / DSM 14882 / CIP 104768 / NCIMB 8455) (Ferrobacillus ferrooxidans (strain ATCC 23270)).